Reading from the N-terminus, the 387-residue chain is Phosphoglycerate kinase (387 aa).

Residues 21–23, Arg36, 59–62, Arg113, and Arg146 each bind substrate; these read DLN and HLGR. ATP is bound by residues Lys197, Glu314, and 340–343; that span reads GGDT.

This sequence belongs to the phosphoglycerate kinase family. As to quaternary structure, monomer.

Its subcellular location is the cytoplasm. It catalyses the reaction (2R)-3-phosphoglycerate + ATP = (2R)-3-phospho-glyceroyl phosphate + ADP. It participates in carbohydrate degradation; glycolysis; pyruvate from D-glyceraldehyde 3-phosphate: step 2/5. The chain is Phosphoglycerate kinase from Proteus mirabilis (strain HI4320).